Here is a 358-residue protein sequence, read N- to C-terminus: Protein RecA (358 aa).

78–85 (GPESGGKT) serves as a coordination point for ATP.

This sequence belongs to the RecA family.

The protein localises to the cytoplasm. Its function is as follows. Can catalyze the hydrolysis of ATP in the presence of single-stranded DNA, the ATP-dependent uptake of single-stranded DNA by duplex DNA, and the ATP-dependent hybridization of homologous single-stranded DNAs. It interacts with LexA causing its activation and leading to its autocatalytic cleavage. In Deinococcus geothermalis (strain DSM 11300 / CIP 105573 / AG-3a), this protein is Protein RecA.